The primary structure comprises 704 residues: Non-sulfated chondroitin lyase E66 (704 aa).

The signal sequence occupies residues 1–23 (MSIVLIIVIVVIFLICFLYLSNS). Catalysis depends on proton acceptor residues asparagine 236 and histidine 291. Tyrosine 299 acts as the Proton donor in catalysis.

The protein belongs to the baculoviridae E66 family.

The protein localises to the virion membrane. It is found in the host nucleus. It localises to the host cytoplasm. Functionally, component of the polyhedra envelope. Plays an essential role in oral infectivity. May digest, with its chondroitin lyase activity, the chondroitin sulfate barrier of the peritrophic matrix of the host midgut to facilitate viral infection in the epithelial cells. This chain is Non-sulfated chondroitin lyase E66 (P79), found in Lepidoptera (butterflies and moths).